We begin with the raw amino-acid sequence, 449 residues long: NADP-specific glutamate dehydrogenase (449 aa).

Lys125 is a catalytic residue.

This sequence belongs to the Glu/Leu/Phe/Val dehydrogenases family. In terms of assembly, homohexamer.

The catalysed reaction is L-glutamate + NADP(+) + H2O = 2-oxoglutarate + NH4(+) + NADPH + H(+). This is NADP-specific glutamate dehydrogenase from Giardia intestinalis (Giardia lamblia).